A 174-amino-acid chain; its full sequence is Magnetosome protein MamT (174 aa).

At 1-9 (MGTPGGGRR) the chain is on the cytoplasmic side. Residues 10 to 28 (WMTLISITLLMVVGLGLYW) form a helical membrane-spanning segment. The Lumenal portion of the chain corresponds to 29-174 (DELSLSAGIS…EKKSGIKWLL (146 aa)). The MCR (magnetochrome) 1 motif lies at 87–107 (VMPGTGMPHPYVGDCIQCHLM). Heme-binding residues include Cys101, Cys104, His105, Cys152, Cys155, and His156. The MCR 2 motif lies at 138–158 (ILPTTRQPHPPAGRCIKCHDI).

This sequence belongs to the magnetosome MamT family. The cofactor is heme.

It localises to the magnetosome membrane. Functionally, may play a role in magnetite crystal maturation. May transfer electrons to balance the Fe(2+)-Fe(3+) ratio during magnetite formation. The chain is Magnetosome protein MamT from Magnetospirillum gryphiswaldense (strain DSM 6361 / JCM 21280 / NBRC 15271 / MSR-1).